We begin with the raw amino-acid sequence, 957 residues long: MTQTLSQLENSGAFIERHIGPDAAQQQEMLNAVGAQSLNALTGQIVPKDIQLATPPQVGAPATEYAALAELKAIASRNKRFTSYIGIGYTAVQLPPVILRNMLENPGWYTAYTPYQPEVSQGRLEALLNFQQVTLDLTGLDMASASLLDEATAAAEAMAMAKRVSKLKNANRFFVASDVHPQTLDVVRTRAETFGFEVIVDDAQKVLDHQDVFGVLLQQVGTTGEIHDYTALISELKSRKIVVSVAADIMALVLLTAPGKQGADIVFGSAQRFGVPMGYGGPHAAFFAAKDEYKRSMPGRIIGVSKDAAGNTALRMAMQTREQHIRREKANSNICTSQVLLANIASLYAVYHGPVGLKRIANRIHRLTDILAAGLQQKGQKLRHAHYFDTLCVEVADKAGVLARAEAAEINLRSDILNAVGITLDETTTRENVMQLFSVLLGDNHGLDIDTLDKDVAHDSRSIQPAMLRDDEILTHPVFNRYHSETEMMRYMHSLERKDLALNQAMIPLGSCTMKLNAAAEMIPITWPEFAELHPFCPPEQAEGYQQMIAQLADWLVKLTGYDAVCMQPNSGAQGEYAGLLAIRHYHESRNEGHRDICLIPASAHGTNPASAHMAGMQVVVVACDKNGNIDLTDLRAKAEQAGDNLSCIMVTYPSTHGVYEETIREVCEIVHQFGGQVYLDGANMNAQVGITSPGFIGADVSHLNLHKTFCIPHGGGGPGMGPIGVKAHLAPFVPGHSVVQIEGMLTRQGAVSAAPFGSASILPISWMYIRMMGAEGLKKASQVAILNANYIASRLQDAFPVLYTGRDGRVAHECILDIRPLKEETGISELDIAKRLIDYGFHAPTMSFPVAGTLMVEPTESESKVELDRFIDAMLAIRAEIDQVKAGVWPLEDNPLVNAPHIQNELVAEWAHPYSREVAVFPAGVADKYWPTVKRLDDVYGDRNLFCSCVPISEYQ.

An N6-(pyridoxal phosphate)lysine modification is found at Lys-708.

The protein belongs to the GcvP family. The glycine cleavage system is composed of four proteins: P, T, L and H. The cofactor is pyridoxal 5'-phosphate.

It carries out the reaction N(6)-[(R)-lipoyl]-L-lysyl-[glycine-cleavage complex H protein] + glycine + H(+) = N(6)-[(R)-S(8)-aminomethyldihydrolipoyl]-L-lysyl-[glycine-cleavage complex H protein] + CO2. Functionally, the glycine cleavage system catalyzes the degradation of glycine. The P protein binds the alpha-amino group of glycine through its pyridoxal phosphate cofactor; CO(2) is released and the remaining methylamine moiety is then transferred to the lipoamide cofactor of the H protein. This chain is Glycine dehydrogenase (decarboxylating), found in Escherichia fergusonii (strain ATCC 35469 / DSM 13698 / CCUG 18766 / IAM 14443 / JCM 21226 / LMG 7866 / NBRC 102419 / NCTC 12128 / CDC 0568-73).